Here is a 355-residue protein sequence, read N- to C-terminus: Phenylalanine--tRNA ligase alpha subunit (355 aa).

Residue E273 participates in Mg(2+) binding.

It belongs to the class-II aminoacyl-tRNA synthetase family. Phe-tRNA synthetase alpha subunit type 1 subfamily. As to quaternary structure, tetramer of two alpha and two beta subunits. The cofactor is Mg(2+).

The protein resides in the cytoplasm. The catalysed reaction is tRNA(Phe) + L-phenylalanine + ATP = L-phenylalanyl-tRNA(Phe) + AMP + diphosphate + H(+). This chain is Phenylalanine--tRNA ligase alpha subunit, found in Bifidobacterium longum subsp. infantis (strain ATCC 15697 / DSM 20088 / JCM 1222 / NCTC 11817 / S12).